A 313-amino-acid polypeptide reads, in one-letter code: Porphobilinogen deaminase (313 aa).

Cys242 carries the S-(dipyrrolylmethanemethyl)cysteine modification.

The protein belongs to the HMBS family. In terms of assembly, monomer. Dipyrromethane is required as a cofactor.

It catalyses the reaction 4 porphobilinogen + H2O = hydroxymethylbilane + 4 NH4(+). The protein operates within porphyrin-containing compound metabolism; protoporphyrin-IX biosynthesis; coproporphyrinogen-III from 5-aminolevulinate: step 2/4. Its function is as follows. Tetrapolymerization of the monopyrrole PBG into the hydroxymethylbilane pre-uroporphyrinogen in several discrete steps. This Enterobacter sp. (strain 638) protein is Porphobilinogen deaminase.